The primary structure comprises 138 residues: MRHSYRGRRFNRTAEHRKAMFANMSAALIKHEQIVTTLPKAKDLRPVVEKLISLGRTDSIHARRLAMAQIRDADMVKKLFTVLGPRYQSRPGGYCRIMKAGFRYGDNAPMAVIEFVDRDVDARGKDSGPTAVETADAA.

This sequence belongs to the bacterial ribosomal protein bL17 family. In terms of assembly, part of the 50S ribosomal subunit. Contacts protein L32.

The protein is Large ribosomal subunit protein bL17 of Methylorubrum populi (strain ATCC BAA-705 / NCIMB 13946 / BJ001) (Methylobacterium populi).